The following is a 235-amino-acid chain: Small ribosomal subunit protein uS3 (235 aa).

One can recognise a KH type-2 domain in the interval 39–107 (VRSYVKKKLI…PAQVNISEIR (69 aa)).

This sequence belongs to the universal ribosomal protein uS3 family. Part of the 30S ribosomal subunit. Forms a tight complex with proteins S10 and S14.

Functionally, binds the lower part of the 30S subunit head. Binds mRNA in the 70S ribosome, positioning it for translation. This chain is Small ribosomal subunit protein uS3, found in Buchnera aphidicola subsp. Cinara cedri (strain Cc).